A 114-amino-acid polypeptide reads, in one-letter code: Hydrogenase maturation factor HypA (114 aa).

His-2 is a binding site for Ni(2+). Zn(2+) contacts are provided by Cys-70, Cys-73, Cys-86, and Cys-89.

This sequence belongs to the HypA/HybF family.

Functionally, involved in the maturation of [NiFe] hydrogenases. Required for nickel insertion into the metal center of the hydrogenase. The sequence is that of Hydrogenase maturation factor HypA from Trichodesmium erythraeum (strain IMS101).